The following is a 963-amino-acid chain: Longitudinals lacking protein, isoforms J/P/Q/S/Z (963 aa).

The 66-residue stretch at 32–97 (VDCTLAAEGK…MYRGEVNISQ (66 aa)) folds into the BTB domain. 4 disordered regions span residues 115 to 200 (LSDN…SSVL), 228 to 340 (SSGP…ASAS), 447 to 469 (DAQQ…RIRV), and 482 to 520 (GKSS…VSTT). Composition is skewed to low complexity over residues 162-175 (SGDV…SSSP), 228-251 (SSGP…LTST), 263-293 (TSST…QTTS), and 329-340 (NSATGPNPASAS). Residues 491–512 (KLTQSKKSLISDAKTTNKTSTP) are compositionally biased toward polar residues. The segment at 849 to 871 (WVCRNCNRTYKWKNSLKCHLKNE) adopts a C2H2-type 1; degenerate zinc-finger fold. The segment at 878 to 901 (YFCSKMCGYATNVHSNLKRHLNTK) adopts a C2H2-type 2; degenerate zinc-finger fold. Positions 900–963 (TKCRDREKDA…YTLVFQNDSA (64 aa)) are disordered. Residues 901 to 915 (KCRDREKDADDEKKP) are compositionally biased toward basic and acidic residues. Positions 937 to 953 (SSSNNNNNGGGSSTSST) are enriched in low complexity. A compositionally biased stretch (polar residues) spans 954–963 (YTLVFQNDSA).

By stage 11, isoform Q, isoform P and isoform Z are expressed throughout the mesoderm. From stage 15, expression of isoform P expands to all tissues, whereas expression of isoform Z and isoform Q becomes restricted during later stages; starting from stage 14 to 16, isoform Z is expressed in muscle, and isoform Q and isoform Z are expressed in the CNS. For some isoforms, expression is also seen in specific types of cells in the embryo; isoform Z is expressed in the ventral furrow at stage 5, and isoform Q is expressed around the tracheal pits at stage 11. Isoform Z also shows transient enrichment in a dorsal cell layer in the CNS at stages 13 and 14.

It localises to the nucleus. Functionally, putative transcription factor required for axon growth and guidance in the central and peripheral nervous systems. Repels CNS axons away from the midline by promoting the expression of the midline repellent sli and its receptor robo. This chain is Longitudinals lacking protein, isoforms J/P/Q/S/Z, found in Drosophila melanogaster (Fruit fly).